We begin with the raw amino-acid sequence, 124 residues long: Small ribosomal subunit protein uS12 (124 aa).

The tract at residues 1–29 (MATINQLVRKGRKRRVAKSNVPALEASPQ) is disordered. The residue at position 89 (aspartate 89) is a 3-methylthioaspartic acid. A disordered region spans residues 101-124 (AADTAGVDKRRQGRSKYGAKRPKS). The span at 111–124 (RQGRSKYGAKRPKS) shows a compositional bias: basic residues.

Belongs to the universal ribosomal protein uS12 family. As to quaternary structure, part of the 30S ribosomal subunit. Contacts proteins S8 and S17. May interact with IF1 in the 30S initiation complex.

With S4 and S5 plays an important role in translational accuracy. Its function is as follows. Interacts with and stabilizes bases of the 16S rRNA that are involved in tRNA selection in the A site and with the mRNA backbone. Located at the interface of the 30S and 50S subunits, it traverses the body of the 30S subunit contacting proteins on the other side and probably holding the rRNA structure together. The combined cluster of proteins S8, S12 and S17 appears to hold together the shoulder and platform of the 30S subunit. The chain is Small ribosomal subunit protein uS12 from Alkalilimnicola ehrlichii (strain ATCC BAA-1101 / DSM 17681 / MLHE-1).